Consider the following 341-residue polypeptide: Serpentine receptor class epsilon-8 (341 aa).

The next 7 helical transmembrane spans lie at 37-57 (VGFLVFSWIEFLYLFYLFIFI), 64-86 (LTFLFMNYGGQYFCSMLSRCIIV), 101-123 (WILVANFARTVCLFIAMYILPIF), 143-163 (IWVSLMILSIFHPLVFASAIA), 169-189 (IPVVVHVISFFIVNIIGYIGI), 235-255 (VQISILFFNIGCCSILLMDHF), and 264-284 (WSYVCFNFFALVYGITVPIIL).

Belongs to the nematode receptor-like protein sre family.

The protein localises to the membrane. This is Serpentine receptor class epsilon-8 (sre-8) from Caenorhabditis elegans.